Reading from the N-terminus, the 700-residue chain is Pentatricopeptide repeat-containing protein 1, mitochondrial (700 aa).

The disordered stretch occupies residues 49-93 (SSSQLPLGQERQENTGSLGSDPSHSNSTATQEEDEEEEESFGTLS). Residues 62–78 (NTGSLGSDPSHSNSTAT) are compositionally biased toward polar residues. A compositionally biased stretch (acidic residues) spans 79–88 (QEEDEEEEES). PPR repeat units follow at residues 135–171 (TPYW…RLQP), 172–206 (MESN…DLEP), 207–245 (SDAT…NFEL), 246–280 (NLKT…GHVV), 281–317 (TEET…GLQP), and 318–354 (SRDS…ATVL). A disordered region spans residues 393–414 (SQALGPPEPPEARVPGKAQPEV). PPR repeat units follow at residues 519 to 553 (DLTF…GLVP), 554 to 585 (NLQT…QVTP), and 586 to 620 (NTHI…RVPV). A disordered region spans residues 672-700 (HPWQKFRTKPQGDQDTGKEADDGCALGGR). Residues 681–692 (PQGDQDTGKEAD) are compositionally biased toward basic and acidic residues.

This sequence belongs to the PTCD1 family. In terms of assembly, associates with mitochondrial leucine tRNAs. Interacts with ELAC2. In terms of tissue distribution, abundant in testes, skeletal muscle and heart.

Its subcellular location is the mitochondrion. It is found in the mitochondrion matrix. Functionally, mitochondrial protein implicated in negative regulation of leucine tRNA levels, as well as negative regulation of mitochondria-encoded proteins and COX activity. Also affects the 3'-processing of mitochondrial tRNAs. This Homo sapiens (Human) protein is Pentatricopeptide repeat-containing protein 1, mitochondrial (PTCD1).